We begin with the raw amino-acid sequence, 150 residues long: UPF0178 protein DMR_20710 (150 aa).

Belongs to the UPF0178 family.

In Solidesulfovibrio magneticus (strain ATCC 700980 / DSM 13731 / RS-1) (Desulfovibrio magneticus), this protein is UPF0178 protein DMR_20710.